A 173-amino-acid chain; its full sequence is Ribosome maturation factor RimM (173 aa).

Residues 78–157 enclose the PRC barrel domain; that stretch reads EEEFYLADLI…VLVVPPEEVE (80 aa). The segment at 152–173 is disordered; it reads PPEEVEAQEPPEKDAGGDEPSP.

This sequence belongs to the RimM family. As to quaternary structure, binds ribosomal protein uS19.

It is found in the cytoplasm. An accessory protein needed during the final step in the assembly of 30S ribosomal subunit, possibly for assembly of the head region. Essential for efficient processing of 16S rRNA. May be needed both before and after RbfA during the maturation of 16S rRNA. It has affinity for free ribosomal 30S subunits but not for 70S ribosomes. The polypeptide is Ribosome maturation factor RimM (Beijerinckia indica subsp. indica (strain ATCC 9039 / DSM 1715 / NCIMB 8712)).